The following is a 114-amino-acid chain: Phosphoribosyl-AMP cyclohydrolase (114 aa).

Asp-76 provides a ligand contact to Mg(2+). Cys-77 contributes to the Zn(2+) binding site. 2 residues coordinate Mg(2+): Asp-78 and Asp-80. Cys-93 and Cys-100 together coordinate Zn(2+).

The protein belongs to the PRA-CH family. In terms of assembly, homodimer. The cofactor is Mg(2+). It depends on Zn(2+) as a cofactor.

It localises to the cytoplasm. It catalyses the reaction 1-(5-phospho-beta-D-ribosyl)-5'-AMP + H2O = 1-(5-phospho-beta-D-ribosyl)-5-[(5-phospho-beta-D-ribosylamino)methylideneamino]imidazole-4-carboxamide. Its pathway is amino-acid biosynthesis; L-histidine biosynthesis; L-histidine from 5-phospho-alpha-D-ribose 1-diphosphate: step 3/9. Catalyzes the hydrolysis of the adenine ring of phosphoribosyl-AMP. In Streptococcus gordonii (strain Challis / ATCC 35105 / BCRC 15272 / CH1 / DL1 / V288), this protein is Phosphoribosyl-AMP cyclohydrolase.